A 171-amino-acid polypeptide reads, in one-letter code: Histone H1, gonadal (171 aa).

Disordered regions lie at residues 1–40 (AASP…AHPP) and 133–171 (AKAK…KAKP). The span at 9–35 (ASPRKSPKKSPRKSPKKKSPRKRKARS) shows a compositional bias: basic residues. Positions 37–111 (AHPPVIDMIT…GATGRFRVGA (75 aa)) constitute an H15 domain.

Belongs to the histone H1/H5 family. Sperm.

It localises to the nucleus. The protein resides in the chromosome. In terms of biological role, histones H1 are necessary for the condensation of nucleosome chains into higher-order structures. The polypeptide is Histone H1, gonadal (Echinolampas crassa (Sea urchin)).